We begin with the raw amino-acid sequence, 370 residues long: UDP-N-acetylglucosamine--N-acetylmuramyl-(pentapeptide) pyrophosphoryl-undecaprenol N-acetylglucosamine transferase (370 aa).

Residues 15–17 (TGG), asparagine 129, arginine 171, serine 200, isoleucine 256, and glutamine 301 contribute to the UDP-N-acetyl-alpha-D-glucosamine site.

The protein belongs to the glycosyltransferase 28 family. MurG subfamily.

The protein resides in the cell membrane. The catalysed reaction is di-trans,octa-cis-undecaprenyl diphospho-N-acetyl-alpha-D-muramoyl-L-alanyl-D-glutamyl-meso-2,6-diaminopimeloyl-D-alanyl-D-alanine + UDP-N-acetyl-alpha-D-glucosamine = di-trans,octa-cis-undecaprenyl diphospho-[N-acetyl-alpha-D-glucosaminyl-(1-&gt;4)]-N-acetyl-alpha-D-muramoyl-L-alanyl-D-glutamyl-meso-2,6-diaminopimeloyl-D-alanyl-D-alanine + UDP + H(+). Its pathway is cell wall biogenesis; peptidoglycan biosynthesis. Cell wall formation. Catalyzes the transfer of a GlcNAc subunit on undecaprenyl-pyrophosphoryl-MurNAc-pentapeptide (lipid intermediate I) to form undecaprenyl-pyrophosphoryl-MurNAc-(pentapeptide)GlcNAc (lipid intermediate II). The polypeptide is UDP-N-acetylglucosamine--N-acetylmuramyl-(pentapeptide) pyrophosphoryl-undecaprenol N-acetylglucosamine transferase (Caldicellulosiruptor saccharolyticus (strain ATCC 43494 / DSM 8903 / Tp8T 6331)).